A 435-amino-acid polypeptide reads, in one-letter code: Serine/threonine-protein kinase 40 (435 aa).

Residues F35 to I332 enclose the Protein kinase domain. Residues L41 to I49 and K66 contribute to the ATP site. D197 (proton acceptor) is an active-site residue.

It belongs to the protein kinase superfamily. CAMK Ser/Thr protein kinase family.

It localises to the nucleus. The protein resides in the cytoplasm. The catalysed reaction is L-seryl-[protein] + ATP = O-phospho-L-seryl-[protein] + ADP + H(+). It carries out the reaction L-threonyl-[protein] + ATP = O-phospho-L-threonyl-[protein] + ADP + H(+). Functionally, may be a negative regulator of NF-kappa-B and p53-mediated gene transcription. The polypeptide is Serine/threonine-protein kinase 40 (STK40) (Gallus gallus (Chicken)).